Reading from the N-terminus, the 428-residue chain is Enolase (428 aa).

A (2R)-2-phosphoglycerate-binding site is contributed by Gln-162. Glu-204 functions as the Proton donor in the catalytic mechanism. Residues Asp-241, Glu-283, and Asp-310 each contribute to the Mg(2+) site. The (2R)-2-phosphoglycerate site is built by Lys-335, Arg-364, Ser-365, and Lys-386. The Proton acceptor role is filled by Lys-335.

It belongs to the enolase family. Requires Mg(2+) as cofactor.

It is found in the cytoplasm. It localises to the secreted. The protein localises to the cell surface. It carries out the reaction (2R)-2-phosphoglycerate = phosphoenolpyruvate + H2O. The protein operates within carbohydrate degradation; glycolysis; pyruvate from D-glyceraldehyde 3-phosphate: step 4/5. In terms of biological role, catalyzes the reversible conversion of 2-phosphoglycerate (2-PG) into phosphoenolpyruvate (PEP). It is essential for the degradation of carbohydrates via glycolysis. This Rhodococcus erythropolis (strain PR4 / NBRC 100887) protein is Enolase.